Reading from the N-terminus, the 526-residue chain is ATP synthase subunit alpha (526 aa).

171–178 (GDRQTGKT) lines the ATP pocket.

It belongs to the ATPase alpha/beta chains family. F-type ATPases have 2 components, CF(1) - the catalytic core - and CF(0) - the membrane proton channel. CF(1) has five subunits: alpha(3), beta(3), gamma(1), delta(1), epsilon(1). CF(0) has four main subunits: a(1), b(1), b'(1) and c(9-12).

It is found in the cell inner membrane. The catalysed reaction is ATP + H2O + 4 H(+)(in) = ADP + phosphate + 5 H(+)(out). In terms of biological role, produces ATP from ADP in the presence of a proton gradient across the membrane. The alpha chain is a regulatory subunit. This chain is ATP synthase subunit alpha, found in Chlorobaculum tepidum (strain ATCC 49652 / DSM 12025 / NBRC 103806 / TLS) (Chlorobium tepidum).